A 141-amino-acid polypeptide reads, in one-letter code: MLMPKRTKYRKMMKGRNRGYANRGTEFTFGDFALKATEAGRINSRQIEAARIALTRFVKRQGKTWIRVFPDKPLTKKPLETRMGKGKGAVEEWVMNIKPGRIIYEMAGVNEEMARQALTLAMHKLPFKTKFVTRESQNEIY.

This sequence belongs to the universal ribosomal protein uL16 family. As to quaternary structure, part of the 50S ribosomal subunit.

Functionally, binds 23S rRNA and is also seen to make contacts with the A and possibly P site tRNAs. In Campylobacter lari (strain RM2100 / D67 / ATCC BAA-1060), this protein is Large ribosomal subunit protein uL16.